Consider the following 264-residue polypeptide: MIEVSGVSVRLSGKTIISDVAFTARAGELTAIAGPNGSGKTTTMKAISGELAYGGSVRIGGGEVKGLKPWQLAAIRGVLPQASTISFPFTVREIVRMGLTSGLNLHPDKAEQTAAAALASVDLTGFEGRFYQELSGGEQQRVQLARVLCQIAEPIVDGKPCWLLLDEPVSSLDISHQLTIMTLARNFCERGGGVIAVMHDLNLTALFADRIVLMKSGRLAAAGSIGEVLTNETMLAVFGCALRINQVPSDGTPFVLAHSAISRP.

One can recognise an ABC transporter domain in the interval 2-241 (IEVSGVSVRL…ETMLAVFGCA (240 aa)). Position 34–41 (34–41 (GPNGSGKT)) interacts with ATP.

This sequence belongs to the ABC transporter superfamily. Heme (hemin) importer (TC 3.A.1.14.5) family. As to quaternary structure, the complex is composed of two ATP-binding proteins (HmuV), two transmembrane proteins (HmuU) and a solute-binding protein (HmuT).

The protein localises to the cell inner membrane. In terms of biological role, part of the ABC transporter complex HmuTUV involved in hemin import. Responsible for energy coupling to the transport system. The chain is Hemin import ATP-binding protein HmuV from Rhizobium johnstonii (strain DSM 114642 / LMG 32736 / 3841) (Rhizobium leguminosarum bv. viciae).